Reading from the N-terminus, the 272-residue chain is Phosphate import ATP-binding protein PstB (272 aa).

In terms of domain architecture, ABC transporter spans 26 to 267; that stretch reads IVVKNWNLYY…PQVKRTEDYI (242 aa). 58-65 is an ATP binding site; sequence GPSGCGKS.

Belongs to the ABC transporter superfamily. Phosphate importer (TC 3.A.1.7) family. In terms of assembly, the complex is composed of two ATP-binding proteins (PstB), two transmembrane proteins (PstC and PstA) and a solute-binding protein (PstS).

Its subcellular location is the cell inner membrane. The enzyme catalyses phosphate(out) + ATP + H2O = ADP + 2 phosphate(in) + H(+). In terms of biological role, part of the ABC transporter complex PstSACB involved in phosphate import. Responsible for energy coupling to the transport system. This chain is Phosphate import ATP-binding protein PstB, found in Hydrogenovibrio crunogenus (strain DSM 25203 / XCL-2) (Thiomicrospira crunogena).